The primary structure comprises 198 residues: Recombination protein RecR (198 aa).

A C4-type zinc finger spans residues 57–72; sequence CSVCGHITDKDPCYIC. The Toprim domain occupies 80–175; it reads SVLCVVQESK…KVTRIAHGLP (96 aa).

This sequence belongs to the RecR family.

Functionally, may play a role in DNA repair. It seems to be involved in an RecBC-independent recombinational process of DNA repair. It may act with RecF and RecO. This is Recombination protein RecR from Listeria innocua serovar 6a (strain ATCC BAA-680 / CLIP 11262).